The primary structure comprises 526 residues: Protein mono-ADP-ribosyltransferase PARP3 (526 aa).

Residues M1–P55 are disordered. The region spanning D61–Y151 is the WGR domain. One can recognise a PARP alpha-helical domain in the interval P183–A301. The 215-residue stretch at H312–F526 folds into the PARP catalytic domain.

Belongs to the ARTD/PARP family.

Its subcellular location is the nucleus. It is found in the chromosome. The protein localises to the cytoplasm. It localises to the cytoskeleton. The protein resides in the microtubule organizing center. Its subcellular location is the centrosome. It is found in the centriole. The enzyme catalyses L-aspartyl-[protein] + NAD(+) = 4-O-(ADP-D-ribosyl)-L-aspartyl-[protein] + nicotinamide. It catalyses the reaction L-glutamyl-[protein] + NAD(+) = 5-O-(ADP-D-ribosyl)-L-glutamyl-[protein] + nicotinamide. It carries out the reaction L-lysyl-[protein] + NAD(+) = N(6)-(ADP-D-ribosyl)-L-lysyl-[protein] + nicotinamide + H(+). Its function is as follows. Mono-ADP-ribosyltransferase that mediates mono-ADP-ribosylation of target proteins and plays a key role in the response to DNA damage. Mediates mono-ADP-ribosylation of glutamate, aspartate or lysine residues on target proteins. In contrast to PARP1 and PARP2, it is not able to mediate poly-ADP-ribosylation. Involved in DNA repair by mediating mono-ADP-ribosylation of a limited number of acceptor proteins involved in chromatin architecture and in DNA metabolism, such as histone H2B, XRCC5 and XRCC6. ADP-ribosylation follows DNA damage and appears as an obligatory step in a detection/signaling pathway leading to the reparation of DNA strand breaks. Involved in single-strand break repair by catalyzing mono-ADP-ribosylation of histone H2B on 'Glu-2' (H2BE2ADPr) of nucleosomes containing nicked DNA. Cooperates with the XRCC5-XRCC6 (Ku80-Ku70) heterodimer to limit end-resection thereby promoting accurate NHEJ. Associates with a number of DNA repair factors and is involved in the response to exogenous and endogenous DNA strand breaks. Together with APLF, promotes the retention of the LIG4-XRCC4 complex on chromatin and accelerate DNA ligation during non-homologous end-joining (NHEJ). In addition to proteins, also able to ADP-ribosylate DNA: mediates DNA mono-ADP-ribosylation of DNA strand break termini via covalent addition of a single ADP-ribose moiety to a 5'- or 3'-terminal phosphate residues in DNA containing multiple strand breaks. This chain is Protein mono-ADP-ribosyltransferase PARP3, found in Gallus gallus (Chicken).